The sequence spans 362 residues: Patr class I histocompatibility antigen, B-2 alpha chain (362 aa).

The N-terminal stretch at Met1–Ala24 is a signal peptide. The interval Gly25 to Ala114 is alpha-1. At Gly25 to Ile308 the chain is on the extracellular side. A glycan (N-linked (GlcNAc...) asparagine) is linked at Asn110. The tract at residues Gly115 to Ala206 is alpha-2. 2 cysteine pairs are disulfide-bonded: Cys125–Cys188 and Cys227–Cys283. The tract at residues Asp207–Trp298 is alpha-3. In terms of domain architecture, Ig-like C1-type spans Pro209 to Thr295. The segment at Glu299 to Ile308 is connecting peptide. Residues Val309–Cys332 form a helical membrane-spanning segment. At Arg333–Ala362 the chain is on the cytoplasmic side. The segment at Ser336 to Ala362 is disordered. Residues Ser343–Ala362 are compositionally biased toward low complexity.

The protein belongs to the MHC class I family. As to quaternary structure, heterodimer of an alpha chain and a beta chain (beta-2-microglobulin).

The protein resides in the membrane. Functionally, involved in the presentation of foreign antigens to the immune system. This Pan troglodytes (Chimpanzee) protein is Patr class I histocompatibility antigen, B-2 alpha chain.